The following is a 142-amino-acid chain: Peptide methionine sulfoxide reductase MsrB (142 aa).

The MsrB domain occupies 2–125; sequence LKKDKSELTD…NSAAIQFIPY (124 aa). C114 serves as the catalytic Nucleophile.

This sequence belongs to the MsrB Met sulfoxide reductase family.

It catalyses the reaction L-methionyl-[protein] + [thioredoxin]-disulfide + H2O = L-methionyl-(R)-S-oxide-[protein] + [thioredoxin]-dithiol. This is Peptide methionine sulfoxide reductase MsrB from Staphylococcus aureus (strain USA300).